A 58-amino-acid chain; its full sequence is Large ribosomal subunit protein uL30 (58 aa).

This sequence belongs to the universal ribosomal protein uL30 family. In terms of assembly, part of the 50S ribosomal subunit.

The polypeptide is Large ribosomal subunit protein uL30 (Azotobacter vinelandii (strain DJ / ATCC BAA-1303)).